The sequence spans 231 residues: MRLVIARCSVDYTGRLTAHLPLATRLLLVKADSSVLVHSDGGSYKPLNWMSPPCTLRVAEPDDDDVGRGVREVWTVQNAKSDDRLVVRIHDVLSDSSHDLGVDPGLVKDGVEAHLQALLAEQIDLLGSGHVLVRREFPTAIGPVDILARSAAGETVAVEIKRRGDIDGVEQLTRYLELLGRDPLLAPVQGVFAAQEIKPQARVLAQDRGIRCLVLDYDAMRGLDDVDSRLF.

It belongs to the NucS endonuclease family.

The protein localises to the cytoplasm. In terms of biological role, cleaves both 3' and 5' ssDNA extremities of branched DNA structures. The polypeptide is Endonuclease NucS (Beutenbergia cavernae (strain ATCC BAA-8 / DSM 12333 / CCUG 43141 / JCM 11478 / NBRC 16432 / NCIMB 13614 / HKI 0122)).